The following is a 244-amino-acid chain: Lymphotoxin-beta (244 aa).

At 1 to 18 (MGALGLEGRGGRLQGRGS) the chain is on the cytoplasmic side. Residues 19-48 (LLLAVAGATSLVTLLLAVPITVLAVLALVP) form a helical; Signal-anchor for type II membrane protein membrane-spanning segment. Residues 49–244 (QDQGGLVTET…KTFFGAVMVG (196 aa)) lie on the Extracellular side of the membrane. Residues 88–243 (PAAHLIGAPL…GKTFFGAVMV (156 aa)) enclose the THD domain. Asn222 carries N-linked (GlcNAc...) asparagine glycosylation.

The protein belongs to the tumor necrosis factor family. In terms of assembly, heterotrimer of either two LTB and one LTA subunits or (less prevalent) two LTA and one LTB subunits.

The protein localises to the membrane. In terms of biological role, cytokine that binds to LTBR/TNFRSF3. May play a specific role in immune response regulation. Provides the membrane anchor for the attachment of the heterotrimeric complex to the cell surface. This chain is Lymphotoxin-beta (LTB), found in Pan troglodytes (Chimpanzee).